Consider the following 193-residue polypeptide: MQNIKCVVVGDGAVGKTCMLISYTTNGFPSEYIPTVFDNYCANLMLEGKPYSLGLWDTAGQEDYDRLRPLSYPHTDVFLICFSIISQASFENVTTKWFKEVNHHAPGVPIILVGTKQDIRNDNDSIKKLKEKNIELVPYEKGLEKAKEINAIYLEASALTQRGIKDVFDQCIRSVIYPNKLIKKPKKKSCTIM.

Residue 10–17 participates in GTP binding; the sequence is GDGAVGKT. The Effector region motif lies at 32–40; sequence YIPTVFDNY. Residues 57 to 61 and 115 to 118 each bind GTP; these read DTAGQ and TKQD. Cysteine 190 carries the post-translational modification Cysteine methyl ester. The S-geranylgeranyl cysteine moiety is linked to residue cysteine 190. Residues 191-193 constitute a propeptide, removed in mature form; it reads TIM.

This sequence belongs to the small GTPase superfamily. Rho family. In terms of assembly, interacts with pakB.

It localises to the membrane. Might act in concert and/or share functions with other members of the RHO family in the regulation of a subset of cytoskeletal rearrangements that are required for these processes. This Dictyostelium discoideum (Social amoeba) protein is Rho-related protein racF1 (racF1).